The following is a 444-amino-acid chain: Xylose isomerase (444 aa).

Catalysis depends on residues H101 and D104. 7 residues coordinate Mg(2+): E232, E268, H271, D296, D307, D309, and D339.

The protein belongs to the xylose isomerase family. As to quaternary structure, homotetramer. Requires Mg(2+) as cofactor.

It localises to the cytoplasm. The enzyme catalyses alpha-D-xylose = alpha-D-xylulofuranose. This chain is Xylose isomerase, found in Thermotoga sp. (strain RQ2).